A 151-amino-acid polypeptide reads, in one-letter code: Cytochrome c-type biogenesis protein CcmE (151 aa).

Topologically, residues 1–8 are cytoplasmic; the sequence is MNPQRKKR. A helical; Signal-anchor for type II membrane protein membrane pass occupies residues 9 to 29; sequence LLLIVGLLVGVGVAVGFALSA. Residues 30–151 lie on the Periplasmic side of the membrane; sequence LQQNINLFYT…QAAAGGETKP (122 aa). Heme contacts are provided by histidine 124 and tyrosine 128.

Belongs to the CcmE/CycJ family.

Its subcellular location is the cell inner membrane. In terms of biological role, heme chaperone required for the biogenesis of c-type cytochromes. Transiently binds heme delivered by CcmC and transfers the heme to apo-cytochromes in a process facilitated by CcmF and CcmH. The sequence is that of Cytochrome c-type biogenesis protein CcmE from Pseudomonas putida (strain ATCC 700007 / DSM 6899 / JCM 31910 / BCRC 17059 / LMG 24140 / F1).